We begin with the raw amino-acid sequence, 488 residues long: Glutamyl-tRNA(Gln) amidotransferase subunit A (488 aa).

Catalysis depends on charge relay system residues Lys78 and Ser153. Residue Ser177 is the Acyl-ester intermediate of the active site.

The protein belongs to the amidase family. GatA subfamily. Heterotrimer of A, B and C subunits.

It carries out the reaction L-glutamyl-tRNA(Gln) + L-glutamine + ATP + H2O = L-glutaminyl-tRNA(Gln) + L-glutamate + ADP + phosphate + H(+). Its function is as follows. Allows the formation of correctly charged Gln-tRNA(Gln) through the transamidation of misacylated Glu-tRNA(Gln) in organisms which lack glutaminyl-tRNA synthetase. The reaction takes place in the presence of glutamine and ATP through an activated gamma-phospho-Glu-tRNA(Gln). The chain is Glutamyl-tRNA(Gln) amidotransferase subunit A from Thermoanaerobacter pseudethanolicus (strain ATCC 33223 / 39E) (Clostridium thermohydrosulfuricum).